Consider the following 414-residue polypeptide: Nuclear localization sequence-binding protein (414 aa).

Disordered regions lie at residues 1 to 172 (MAKT…TIFV), 244 to 264 (STSK…TPSE), and 336 to 414 (RPVR…KTFD). Positions 10-26 (NKKEVKASKQAKEEKAK) are enriched in basic and acidic residues. Composition is skewed to low complexity over residues 27 to 44 (AVSS…SSSE) and 54 to 73 (ESSS…SSSD). Over residues 78 to 87 (AETKKEESKD) the composition is skewed to basic and acidic residues. Phosphoserine is present on residues Ser-93, Ser-95, Ser-96, Ser-97, Ser-116, Ser-127, Ser-129, Ser-131, and Ser-143. A compositionally biased stretch (acidic residues) spans 96–105 (SSDEEEEEEK). The segment covering 106 to 117 (EETKKEESKESS) has biased composition (basic and acidic residues). Positions 118-128 (SSDSSSSSSSD) are enriched in low complexity. Positions 134-144 (EESNDKKRKSE) are enriched in basic and acidic residues. RRM domains lie at 168-246 (ATIF…MSTS) and 267-345 (DTLF…FSSP). Residues 351-386 (GGRGGSRGFGGRGGGRGGNRGFGGRGGARGGRGGFR) are compositionally biased toward gly residues. Omega-N-methylarginine is present on Arg-353. Positions 353–384 (RGGSRGFGGRGGGRGGNRGFGGRGGARGGRGG) are RGG-box. An asymmetric dimethylarginine; by HMT1; alternate mark is found at Arg-357, Arg-362, and Arg-366. Arg-357, Arg-362, and Arg-366 each carry omega-N-methylarginine; by HMT1; alternate. The interval 366 to 384 (RGGNRGFGGRGGARGGRGG) is RNA-binding RGG-box. The residue at position 370 (Arg-370) is an Omega-N-methylarginine. Asymmetric dimethylarginine; by HMT1; alternate occurs at positions 375, 379, and 382. Omega-N-methylarginine; by HMT1; alternate occurs at positions 375, 379, and 382. Arg-386 is modified (omega-N-methylarginine).

It belongs to the RRM GAR family. In terms of processing, methylated by HMT1, forming asymmetric dimethylarginines (DMA) within a domain referred to as an RGG box, made up of repeated Gly-Gly dipeptides interspersed with Arg and aromatic residues. Pyrophosphorylated by 5-diphosphoinositol pentakisphosphate (5-IP7). Serine pyrophosphorylation is achieved by Mg(2+)-dependent, but enzyme independent transfer of a beta-phosphate from a inositol pyrophosphate to a pre-phosphorylated serine residue.

Its subcellular location is the nucleus. The protein localises to the nucleolus. Involved in pre-rRNA processing. Specifically binds nuclear localization sequences. Candidate for a receptor at the nucleus that may be involved in both RNA and protein transport. Binds telomeric sequences of the type (TG[1-3])n in vitro. In Saccharomyces cerevisiae (strain ATCC 204508 / S288c) (Baker's yeast), this protein is Nuclear localization sequence-binding protein.